The following is a 137-amino-acid chain: MLAPKKVKFRKWQKGRLRGPALRGISIAYGDIALKSTEHGKLTSQQIEAARIAMMRHIKRGGKVWIRVFPDHPITAKPLETRQGSGKGSPVGWCAPVKPGRILYEIKGVNIDLAREALIRAAHKLPVKTVIVLKERL.

The protein belongs to the universal ribosomal protein uL16 family. In terms of assembly, part of the 50S ribosomal subunit.

Functionally, binds 23S rRNA and is also seen to make contacts with the A and possibly P site tRNAs. In Lawsonia intracellularis (strain PHE/MN1-00), this protein is Large ribosomal subunit protein uL16.